A 2664-amino-acid chain; its full sequence is Inositol 1,4,5-trisphosphate-gated calcium channel ITPR3 (2664 aa).

The Cytoplasmic segment spans residues 1-2227 (MSEMSSFLHI…YVEGASTGVL (2227 aa)). 5 MIR domains span residues 113–173 (GDVV…LRSN), 174–224 (GDNV…INLF), 232–288 (EEVL…VEVV), 295–372 (GGAG…LDPT), and 378–434 (DSFV…IVSV). Residues Arg266, Thr268, Leu269, and Arg270 each coordinate 1D-myo-inositol 1,4,5-trisphosphate. The tract at residues 320-344 (NPSYKGDASDPKAAGTGAQGRTGRR) is disordered. 6 residues coordinate 1D-myo-inositol 1,4,5-trisphosphate: Arg503, Lys507, Arg510, Tyr567, Arg568, and Lys569. Ca(2+) is bound at residue Arg743. Phosphoserine occurs at positions 909 and 927. Glu1115 and Glu1118 together coordinate Ca(2+). Disordered regions lie at residues 1124-1158 (KGAS…GEKS) and 1790-1850 (QQET…VGER). Polar residues predominate over residues 1792–1805 (ETKSTVAVNMSDLG). Residues Ser1806, Ser1825, and Ser1827 each carry the phosphoserine modification. Residues Glu1875 and Glu1939 each contribute to the Ca(2+) site. The ATP site is built by Ala1989, Glu2142, and Lys2145. Residues 2228–2248 (GSPLISLLFWILICFSIAALF) form a helical membrane-spanning segment. Over 2249–2256 (TKRYSVRP) the chain is Extracellular. A helical membrane pass occupies residues 2257–2277 (LIVALILRSIYYLGIGPTLNI). Over 2278–2286 (LGALNLTNK) the chain is Cytoplasmic. Residues 2287–2304 (IVFVVSFVGNRGTFIRGY) traverse the membrane as a helical segment. The Extracellular segment spans residues 2305–2318 (KAMVMDMEFLYHVG). Residues 2319 to 2339 (YILTSVLGLFAHELFYSILLF) traverse the membrane as a helical segment. The Cytoplasmic segment spans residues 2340 to 2361 (DLIYREETLFNVIKSVTRNGRS). Residues 2362 to 2382 (ILLTALLALILVYLFSIVGFL) form a helical membrane-spanning segment. At 2383–2489 (FLKDDFILEV…ESLFPARVVY (107 aa)) the chain is on the extracellular side. Cys2448 and Cys2454 are joined by a disulfide. The chain crosses the membrane as a helical span at residues 2490–2510 (DLLFFFIVIIIVLNLIFGVII). Residues 2511–2664 (DTFADLRSEK…FVDVQNCMSR (154 aa)) lie on the Cytoplasmic side of the membrane. Residues Cys2531 and Phe2532 each contribute to the ATP site. Cys2531 lines the Zn(2+) pocket. Zn(2+) is bound by residues Cys2534 and His2551. 4 residues coordinate ATP: Lys2553, His2556, Asn2557, and Met2558. His2556 is a binding site for Zn(2+). Thr2574 lines the Ca(2+) pocket. Phosphoserine is present on residues Ser2602 and Ser2663.

It belongs to the InsP3 receptor family. Homotetramer. Homodimer. Interacts with TRPC1, TRPC3 and TRPC4. Interacts with TRPV4. Interacts with SIGMAR1. Interacts with PML and AKT1. Interacts with IRAG2 (via coiled-coil domain). Interacts with CABP1. Interacts with TMBIM4/LFG4. Interacts with CEMIP. Interacts with TESPA1. Interacts with TMEM203. Interacts with BOK; regulates ITPR3 expression. Interacts with BCL2L10. Interacts with CHGA and CHGB. In terms of processing, phosphorylated by AKT1 on serine and/or threonine residues.

The protein resides in the endoplasmic reticulum membrane. Its subcellular location is the cytoplasmic vesicle. It is found in the secretory vesicle membrane. It catalyses the reaction Ca(2+)(in) = Ca(2+)(out). With respect to regulation, inositol 1,4,5-trisphosphate-gated calcium channel is regulated by cytosolic calcium in a biphasic manner. At low concentrations, cytosolic calcium binds at a high-affinity juxtamembrane domain (JD) calcium binding site, allowing ITPR3 to activate by escaping a low-energy resting state through an ensemble of preactivated states. At high cytosolic calcium concentrations, ITPR3 preferentially enters an inhibited state stabilized by calcium binding at a second, low-affinity cytoplasmic domain (CD) calcium binding site. Functionally, inositol 1,4,5-trisphosphate-gated calcium channel that, upon 1D-myo-inositol 1,4,5-trisphosphate binding, transports calcium from the endoplasmic reticulum lumen to cytoplasm, thus releasing the intracellular calcium and therefore participates in cellular calcium ion homeostasis. 1D-myo-inositol 1,4,5-trisphosphate binds to the ligand-free channel without altering its global conformation, yielding the low-energy resting state, then progresses through resting-to preactivated transitions to the higher energy preactivated state, which increases affinity for calcium, promoting binding of the low basal cytosolic calcium at the juxtamembrane domain (JD) site, favoring the transition through the ensemble of high-energy intermediate states along the trajectory to the fully-open activated state. Upon opening, releases calcium in the cytosol where it can bind to the low-affinity cytoplasmic domain (CD) site and stabilizes the inhibited state to terminate calcium release. This is Inositol 1,4,5-trisphosphate-gated calcium channel ITPR3 from Bos taurus (Bovine).